A 309-amino-acid polypeptide reads, in one-letter code: UDP-URONIC ACID TRANSPORTER 1 (309 aa).

The next 10 membrane-spanning stretches (helical) occupy residues 9-29 (TLFISTLIISWYSSNIGVLLL), 43-63 (IFLTMCHMSACAILSYISIVF), 78-98 (FLKVATLSIVFCASVVGGNIS), 104-124 (VSFNQAVGATTPFFTALFAYL), 131-151 (AWVTYGALVPVVAGVVIASGG), 152-172 (EPGFHWFGFIMCISATAARAF), 193-213 (LMLYMSPIAVIALLPVTLFME), 231-251 (WILLLVNSVMAYSANLLNFLV), 256-278 (SALTLQVLGNAKGAVAVVISILI), and 283-302 (VTVMGIGGYSITVLGVVAYG).

Belongs to the TPT transporter family. TPT (TC 2.A.7.9) subfamily. Ubiquitous.

It localises to the golgi apparatus membrane. Functionally, UDP-glucuronic acid transporter that modulates the polysaccharide composition of seed mucilage. Transports UDP-glucuronic acid (UDP-GlcA) and UDP-galacturonic acid (UDP-GalA) in vitro. The polypeptide is UDP-URONIC ACID TRANSPORTER 1 (Arabidopsis thaliana (Mouse-ear cress)).